Here is a 35-residue protein sequence, read N- to C-terminus: MTLAQFAMTFWHDLAAPILAGIITAAIVGWWRNRK.

A helical transmembrane segment spans residues 10 to 30 (FWHDLAAPILAGIITAAIVGW).

The protein belongs to the Ldr toxic peptide family.

The protein localises to the cell inner membrane. Its function is as follows. Toxic component of a type I toxin-antitoxin (TA) system. Overexpression causes rapid cell killing, probably by disrupting the cell inner membrane and disruption of ATP synthesis. In Escherichia coli (strain K12), this protein is Small toxic polypeptide LdrB (ldrB).